The following is a 261-amino-acid chain: Probable membrane transporter protein PD_1894 (261 aa).

The next 8 membrane-spanning stretches (helical) occupy residues 6–26 (LIVT…LGGG), 45–64 (HIAI…ANLI), 78–98 (VIFA…GMLI), 99–119 (DGQR…LLML), 150–170 (AASG…LIFA), 175–195 (TINA…ITTL), 205–225 (WTIA…GTLL), and 239–259 (VFGL…WASL).

This sequence belongs to the 4-toluene sulfonate uptake permease (TSUP) (TC 2.A.102) family.

The protein localises to the cell membrane. The chain is Probable membrane transporter protein PD_1894 from Xylella fastidiosa (strain Temecula1 / ATCC 700964).